The following is a 140-amino-acid chain: Large ribosomal subunit protein uL16 (140 aa).

This sequence belongs to the universal ribosomal protein uL16 family. As to quaternary structure, part of the 50S ribosomal subunit.

Its function is as follows. Binds 23S rRNA and is also seen to make contacts with the A and possibly P site tRNAs. This Trichlorobacter lovleyi (strain ATCC BAA-1151 / DSM 17278 / SZ) (Geobacter lovleyi) protein is Large ribosomal subunit protein uL16.